We begin with the raw amino-acid sequence, 177 residues long: MSRVAKNPVKLPAGVEIKMSGQQLSVKGAKGALELNVHPSVEVIQEGGELRFAGRNGDQQTRAMAGTTRALVNNMVIGVSQGFERKLQLVGVGYKAQAKGQVLSLALGFSHPVDYELPQGVTAETPSQTDILIKGVDKQLVGQVAAEIRDFRRPEPYKGKGVRYSDEVVRRKEAKKK.

Belongs to the universal ribosomal protein uL6 family. Part of the 50S ribosomal subunit.

In terms of biological role, this protein binds to the 23S rRNA, and is important in its secondary structure. It is located near the subunit interface in the base of the L7/L12 stalk, and near the tRNA binding site of the peptidyltransferase center. This Stutzerimonas stutzeri (strain A1501) (Pseudomonas stutzeri) protein is Large ribosomal subunit protein uL6.